The following is a 98-amino-acid chain: NADH-ubiquinone oxidoreductase chain 4L (98 aa).

The next 3 helical transmembrane spans lie at 1 to 21, 29 to 49, and 61 to 81; these read MTLI…GLLM, ALLC…LTIL, and IILL…LVTI.

It belongs to the complex I subunit 4L family. Core subunit of respiratory chain NADH dehydrogenase (Complex I) which is composed of 45 different subunits.

It is found in the mitochondrion inner membrane. The catalysed reaction is a ubiquinone + NADH + 5 H(+)(in) = a ubiquinol + NAD(+) + 4 H(+)(out). In terms of biological role, core subunit of the mitochondrial membrane respiratory chain NADH dehydrogenase (Complex I) which catalyzes electron transfer from NADH through the respiratory chain, using ubiquinone as an electron acceptor. Part of the enzyme membrane arm which is embedded in the lipid bilayer and involved in proton translocation. The sequence is that of NADH-ubiquinone oxidoreductase chain 4L (MT-ND4L) from Eubalaena australis (Southern right whale).